Reading from the N-terminus, the 151-residue chain is Small ribosomal subunit protein uS15 (151 aa).

The interval 1 to 20 (MARLHSGKRGSSGSTRPLRT) is disordered.

This sequence belongs to the universal ribosomal protein uS15 family. Part of the 30S ribosomal subunit.

This is Small ribosomal subunit protein uS15 from Methanococcus maripaludis (strain C5 / ATCC BAA-1333).